The following is a 239-amino-acid chain: O-methyltransferase ankF (239 aa).

S-adenosyl-L-methionine contacts are provided by residues glutamate 71, 73-74 (GT), serine 79, glutamate 98, and alanine 127.

The protein belongs to the class I-like SAM-binding methyltransferase superfamily. Cation-dependent O-methyltransferase family.

It carries out the reaction NK13650 B + S-adenosyl-L-methionine = NK13650 D + S-adenosyl-L-homocysteine + H(+). It participates in secondary metabolite biosynthesis. Its function is as follows. O-methyltransferase; part of the ank cluster that mediates the biosynthesis of NK13650 C, a highly modified cyclo-arginine-tyrosine dipeptide. AnkF converts NK13650 B to produce NK13650 D via methylation of the C-17 phenol group. Within the pathway, the cyclodipeptide synthase ankA acts as the scaffold-generating enzyme and is responsible for formation of the cyclo-Arg-Tyr diketopiperazine (cRY) from L-Arg and L-Tyr. The ankA product cRY is desaturated by the cytochrome P450 monooxygenase ankB to yield a dehydro-cyclodipeptide intermediate. The FAD-dependent monooxygenase ankC then installs the m-OH, ankD catalyzes the attachment of L-homoserine, and ankE ligates citrate to the ankD product to yield NK13650 B. The O-methyltransferase ankF is responsible for methylation of the C-17 phenol group of NK13650 B to produce NK13650 D. Amidation of NK13650 D with L-Asp by ankG then leads to the production of NK13650 C, whereas amidation of NK13650 B produces NK13650 A. This chain is O-methyltransferase ankF, found in Aspergillus thermomutatus (Neosartorya pseudofischeri).